The sequence spans 56 residues: Small ribosomal subunit protein uS14 (56 aa).

Residues C21, C24, C39, and C42 each contribute to the Zn(2+) site.

This sequence belongs to the universal ribosomal protein uS14 family. Component of the small ribosomal subunit. Mature ribosomes consist of a small (40S) and a large (60S) subunit. The 40S subunit contains about 32 different proteins and 1 molecule of RNA (18S). The 60S subunit contains 45 different proteins and 3 molecules of RNA (25S, 5.8S and 5S). It depends on Zn(2+) as a cofactor.

It is found in the cytoplasm. Functionally, component of the ribosome, a large ribonucleoprotein complex responsible for the synthesis of proteins in the cell. The small ribosomal subunit (SSU) binds messenger RNAs (mRNAs) and translates the encoded message by selecting cognate aminoacyl-transfer RNA (tRNA) molecules. The large subunit (LSU) contains the ribosomal catalytic site termed the peptidyl transferase center (PTC), which catalyzes the formation of peptide bonds, thereby polymerizing the amino acids delivered by tRNAs into a polypeptide chain. The nascent polypeptides leave the ribosome through a tunnel in the LSU and interact with protein factors that function in enzymatic processing, targeting, and the membrane insertion of nascent chains at the exit of the ribosomal tunnel. In Candida albicans (strain SC5314 / ATCC MYA-2876) (Yeast), this protein is Small ribosomal subunit protein uS14.